The primary structure comprises 511 residues: BAR/IMD domain-containing adapter protein 2-like 1 (511 aa).

In terms of domain architecture, IMD spans Met-1–Pro-249. A coiled-coil region spans residues Met-115–Leu-154. Thr-248 and Thr-257 each carry phosphothreonine. Phosphoserine occurs at positions 261 and 281. Positions Asn-302 to Arg-328 are disordered. The segment covering Asn-303 to Arg-328 has biased composition (polar residues). 2 positions are modified to phosphoserine: Ser-331 and Ser-354. Residues Met-339–Glu-402 form the SH3 domain. Position 412 is a phosphothreonine (Thr-412). Phosphoserine is present on residues Ser-414, Ser-420, and Ser-422. Residues Arg-451–Arg-511 are disordered. A binds F-actin region spans residues Pro-483–Arg-511.

As to quaternary structure, interacts with RAC1. Binds to F-actin. Interacts with FASLG. Interacts (via SH3 domain) with E.coli effector protein EspF(U) (via PXXP motifs). Identified in a complex containing at least WASL, BAIAP2L1 and E.coli EspF(U). Interacts with E.coli intimin receptor Tir. Post-translationally, phosphorylated on tyrosine in response to insulin.

The protein localises to the cytoplasm. It is found in the cytoskeleton. In terms of biological role, may function as adapter protein. Involved in the formation of clusters of actin bundles. Plays a role in the reorganization of the actin cytoskeleton in response to bacterial infection. This is BAR/IMD domain-containing adapter protein 2-like 1 (BAIAP2L1) from Homo sapiens (Human).